A 398-amino-acid polypeptide reads, in one-letter code: 1-aminocyclopropane-1-carboxylate oxidase homolog 5 (398 aa).

In terms of domain architecture, Fe2OG dioxygenase spans 247–347 (KSHIMFGQYY…RISMPCFVST (101 aa)). His271, Asp273, and His327 together coordinate Fe cation. Arg338 serves as a coordination point for 2-oxoglutarate.

This sequence belongs to the iron/ascorbate-dependent oxidoreductase family. Requires Fe(2+) as cofactor. As to expression, expressed in etiolated seedlings, leaves, stems and flowers.

The chain is 1-aminocyclopropane-1-carboxylate oxidase homolog 5 (2A6) from Arabidopsis thaliana (Mouse-ear cress).